Here is an 858-residue protein sequence, read N- to C-terminus: Low-density lipoprotein receptor-related protein 12 (858 aa).

Positions Met1–Ala32 are cleaved as a signal peptide. The Extracellular segment spans residues Glu33–Arg492. 9 disulfides stabilise this stretch: Cys47–Cys76, Cys103–Cys122, Cys166–Cys178, Cys173–Cys191, Cys185–Cys200, Cys215–Cys232, Cys222–Cys245, Cys239–Cys254, and Cys259–Cys285. Residues Cys47 to Gly159 form the CUB 1 domain. Asn75 carries N-linked (GlcNAc...) asparagine glycosylation. LDL-receptor class A domains lie at Asp165 to Ala201 and Pro214 to Asp255. The CUB 2 domain maps to Cys259–Asp372. N-linked (GlcNAc...) asparagine glycosylation is found at Asn284 and Asn366. 3 LDL-receptor class A domains span residues Phe374 to Thr411, Met412 to Phe449, and Phe450 to Pro486. 9 cysteine pairs are disulfide-bonded: Cys375/Cys388, Cys382/Cys401, Cys395/Cys410, Cys413/Cys426, Cys420/Cys439, Cys433/Cys448, Cys451/Cys463, Cys458/Cys476, and Cys470/Cys485. An N-linked (GlcNAc...) asparagine glycan is attached at Asn409. Asn441 carries N-linked (GlcNAc...) asparagine glycosylation. The chain crosses the membrane as a helical span at residues Val493–Gly513. The Cytoplasmic portion of the chain corresponds to Cys514–Cys858. Disordered stretches follow at residues Ala619–Ala721 and Ser746–Glu767. A compositionally biased stretch (low complexity) spans Ser712–Ala721. The segment covering Ser746–Pro755 has biased composition (polar residues).

Belongs to the LDLR family. As to quaternary structure, may interact with RACK1, ZFYVE9 and NMRK2.

It is found in the membrane. The protein localises to the coated pit. In terms of biological role, probable receptor, which may be involved in the internalization of lipophilic molecules and/or signal transduction. May act as a tumor suppressor. The sequence is that of Low-density lipoprotein receptor-related protein 12 (Lrp12) from Mus musculus (Mouse).